The chain runs to 406 residues: Bifunctional enzyme Fae/Hps (406 aa).

The formaldehyde-activating enzyme stretch occupies residues 1-164 (MSDIYEIGEA…AEKDRGTHPI (164 aa)). Catalysis depends on histidine 20, which acts as the Proton donor. Substrate contacts are provided by aspartate 22, leucine 51, lysine 69, threonine 71, and glutamine 86. The segment at 165 to 406 (MGFKAMKLWN…RLALDEDEKI (242 aa)) is 3-hexulose-6-phosphate synthase.

This sequence in the N-terminal section; belongs to the formaldehyde-activating enzyme family. The protein in the C-terminal section; belongs to the HPS/KGPDC family. HPS subfamily.

The enzyme catalyses 5,6,7,8-tetrahydromethanopterin + formaldehyde = 5,10-methylenetetrahydromethanopterin + H2O. It catalyses the reaction D-ribulose 5-phosphate + formaldehyde = D-arabino-hex-3-ulose 6-phosphate. The protein operates within carbohydrate biosynthesis; D-ribose 5-phosphate biosynthesis. Catalyzes the condensation of formaldehyde with tetrahydromethanopterin (H(4)MPT) to 5,10-methylenetetrahydromethanopterin. In terms of biological role, catalyzes the reversible formation of ribulose-5-phosphate and formaldehyde from 3-hexulose-6-phosphate. This Methanosphaera stadtmanae (strain ATCC 43021 / DSM 3091 / JCM 11832 / MCB-3) protein is Bifunctional enzyme Fae/Hps.